We begin with the raw amino-acid sequence, 550 residues long: (S)-beta-bisabolene synthase (550 aa).

Mg(2+) is bound by residues D303, D307, S451, and E455. Positions 303 to 307 match the DDXXD motif motif; the sequence is DDTYD.

Belongs to the terpene synthase family. Tpsa subfamily. It depends on Mg(2+) as a cofactor. Mn(2+) is required as a cofactor. As to expression, expressed only in young rhizomes. Not detected in leaves, roots and mature rhizomes.

The enzyme catalyses (2E,6E)-farnesyl diphosphate = (S)-beta-bisabolene + diphosphate. In terms of biological role, sesquiterpene synthase involved in the biosynthesis of bisabolene. This is (S)-beta-bisabolene synthase (TPS1) from Zingiber officinale (Ginger).